The following is a 1069-amino-acid chain: MKSSRDEAVGHHSISSFEVMLSALFIMLMVFSIGLIAVSWLAVKESEGDAALGKSHEVRGTFKITSGVTYNPNLQDKHSVDFKVLAFDLQQMIDEIFESSSLKNEYEKSKVFQFEKGSVIVLFDLFFAQWVSDKNVKEELIQGIEANISSQLVTLHIDLNSIDITASLSDFTTAVPVTTSDKLTTSSPMTTSASLGNLSTTVAATTSAPLCNLSTATFATTSGHVSIECQPGSRPCAHAWNCVATDLFCDGEVNCPDGSDEDTGLCATACDGRFLLTGDSGVFQADRYPRPDESGVVCRWIIRVNQGLSIRMNFGSFIPHYTDVLDIYEGIGPSKILRGSFWETDPGTIRIFSNLVTVTFLIKSDEYDYIGFNATYSTFNNSELNNYEKIDCTFDDGFCFWTQDLDDDNEWERIQVTTFPCYTGPRFDHTYGNGSGFYISTPTEQGWRSERVGLSSLSLDLTSEPVCLHFWYYMCCENVYNLNIHISSAETTDKIVFQRKGNYGRNWNYGQVTLNETGEFKVVFNAFRNRGCSTIALDDISLTNGICSQSPYPEPTLVPTPPPELPTDCGGPFELWEPNSTFSSPNFPDKYPNQASCIWNLNAQRGKNIQLHFQEFDLENINDVVEVRDGGEFDSLLLAVYTGPGPVKDLFSTTNRMTVIFTTNMETRRKGFKANFTSGYYLGIPEPCQDDEFQCKDGNCIPLGNLCDSYPHCRDGSDEASCVRFLNGTRSNNGLVQFNIHSIWHIACAENWTTQISNEVCHLLGLGSANSSMPISSTGGGPFVRVNQAPNGSLILTPSLQCSQDSLILLQCNHKSCGEKKVTQKVSPKIVGGSDAQAGAWPWVVALYHRDRSTDRLLCGASLVSSDWLVSAAHCVYRRNLDPTRWTAVLGLHMQSNLTSPQVVRRVVDQIVINPHYDRRRKVNDIAMMHLEFKVNYTDYIQPICLPEENQIFIPGRTCSIAGWGYDKINAGSTVDVLKEADVPLISNEKCQQQLPEYNITESMICAGYEEGGIDSCQGDSGGPLMCQENNRWFLVGVTSFGVQCALPNHPGVYVRVSQFIEWIHSFLH.

The Cytoplasmic segment spans residues Met-1–Glu-18. The chain crosses the membrane as a helical; Signal-anchor for type II membrane protein span at residues Val-19–Glu-47. The Extracellular segment spans residues Gly-48–His-1069. Residues Lys-54–Ser-169 enclose the SEA domain. Residues Asn-147, Asn-197, and Asn-212 are each glycosylated (N-linked (GlcNAc...) asparagine). The 42-residue stretch at Ile-227 to Thr-268 folds into the LDL-receptor class A 1 domain. 4 disulfides stabilise this stretch: Cys-229–Cys-242, Cys-236–Cys-255, Cys-249–Cys-266, and Cys-270–Cys-298. The CUB 1 domain maps to Cys-270–Phe-379. N-linked (GlcNAc...) asparagine glycans are attached at residues Asn-373, Asn-380, Asn-433, Asn-515, Asn-579, and Asn-675. The MAM domain maps to Tyr-387–Gln-549. A disulfide bond links Cys-569 and Cys-597. Positions Cys-569–Gly-679 constitute a CUB 2 domain. One can recognise an LDL-receptor class A 2 domain in the interval Glu-686 to Arg-724. 3 disulfides stabilise this stretch: Cys-688-Cys-700, Cys-695-Cys-713, and Cys-707-Cys-722. Residues Val-723 to Ser-816 enclose the SRCR domain. Asn-727, Asn-751, Asn-770, and Asn-791 each carry an N-linked (GlcNAc...) asparagine glycan. Disulfide bonds link Cys-802–Cys-812, Cys-817–Cys-945, Cys-859–Cys-875, Cys-959–Cys-1027, Cys-991–Cys-1006, and Cys-1017–Cys-1045. The Peptidase S1 domain maps to Ile-830–His-1069. His-874 (charge relay system) is an active-site residue. Asn-897 carries N-linked (GlcNAc...) asparagine glycosylation. Asp-925 serves as the catalytic Charge relay system. Residues Asn-936 and Asn-999 are each glycosylated (N-linked (GlcNAc...) asparagine). Residue Ser-1021 is the Charge relay system of the active site.

The protein belongs to the peptidase S1 family. Heterodimer of a catalytic (light) chain and a multidomain (heavy) chain linked by a disulfide bond. The chains are derived from a single precursor that is cleaved by a trypsin-like protease.

It localises to the membrane. The enzyme catalyses Activation of trypsinogen by selective cleavage of 6-Lys-|-Ile-7 bond.. Its function is as follows. Responsible for initiating activation of pancreatic proteolytic proenzymes (trypsin, chymotrypsin and carboxypeptidase A). It catalyzes the conversion of trypsinogen to trypsin which in turn activates other proenzymes including chymotrypsinogen, procarboxypeptidases, and proelastases. This Mus musculus (Mouse) protein is Enteropeptidase (Tmprss15).